The following is a 476-amino-acid chain: Eukaryotic translation initiation factor 3 subunit L (476 aa).

The region spanning 257-452 (DAIRMFSHIL…DLDYALEKDL (196 aa)) is the PCI domain.

This sequence belongs to the eIF-3 subunit L family. Component of the eukaryotic translation initiation factor 3 (eIF-3) complex.

The protein localises to the cytoplasm. Functionally, component of the eukaryotic translation initiation factor 3 (eIF-3) complex, which is involved in protein synthesis of a specialized repertoire of mRNAs and, together with other initiation factors, stimulates binding of mRNA and methionyl-tRNAi to the 40S ribosome. The eIF-3 complex specifically targets and initiates translation of a subset of mRNAs involved in cell proliferation. The protein is Eukaryotic translation initiation factor 3 subunit L of Emericella nidulans (strain FGSC A4 / ATCC 38163 / CBS 112.46 / NRRL 194 / M139) (Aspergillus nidulans).